We begin with the raw amino-acid sequence, 388 residues long: S-adenosylmethionine synthase (388 aa).

An ATP-binding site is contributed by His16. Asp18 contributes to the Mg(2+) binding site. Residue Glu44 participates in K(+) binding. L-methionine contacts are provided by Glu57 and Gln100. A flexible loop region spans residues 100 to 110 (QSPEIAQGVDR). Residues 165–167 (DAK), Asp240, 246–247 (RK), Ala263, and Lys267 contribute to the ATP site. Asp240 is a binding site for L-methionine. Lys271 provides a ligand contact to L-methionine.

It belongs to the AdoMet synthase family. As to quaternary structure, homotetramer; dimer of dimers. It depends on Mg(2+) as a cofactor. Requires K(+) as cofactor.

The protein resides in the cytoplasm. It carries out the reaction L-methionine + ATP + H2O = S-adenosyl-L-methionine + phosphate + diphosphate. It participates in amino-acid biosynthesis; S-adenosyl-L-methionine biosynthesis; S-adenosyl-L-methionine from L-methionine: step 1/1. Functionally, catalyzes the formation of S-adenosylmethionine (AdoMet) from methionine and ATP. The overall synthetic reaction is composed of two sequential steps, AdoMet formation and the subsequent tripolyphosphate hydrolysis which occurs prior to release of AdoMet from the enzyme. This Acinetobacter baumannii (strain AYE) protein is S-adenosylmethionine synthase.